The chain runs to 406 residues: Arginine deiminase (406 aa).

The active-site Amidino-cysteine intermediate is the Cys396.

This sequence belongs to the arginine deiminase family.

The protein resides in the cytoplasm. The catalysed reaction is L-arginine + H2O = L-citrulline + NH4(+). It functions in the pathway amino-acid degradation; L-arginine degradation via ADI pathway; carbamoyl phosphate from L-arginine: step 1/2. The sequence is that of Arginine deiminase from Aliivibrio fischeri (strain MJ11) (Vibrio fischeri).